The primary structure comprises 1186 residues: Partner and localizer of BRCA2 (1186 aa).

Residues 1-160 (MDEPPGKPLS…QKRTFISQER (160 aa)) form a required for its oligomerization and is important for its focal concentration at DNA damage sites region. Positions 1 to 200 (MDEPPGKPLS…PVTEIRTHLL (200 aa)) are interaction with RAD51. Residues 1-319 (MDEPPGKPLS…SKSGQLPTSS (319 aa)) form an interaction with BRCA1 region. Residues 1-579 (MDEPPGKPLS…EDSLSWSNSA (579 aa)) are DNA-binding (with the preference D loop &gt; dsDNA &gt; ssDNA). Positions 9 to 41 (LSCEEKEKLKEKLAFLKREYSKTLARLQRAQRA) form a coiled coil. Disordered stretches follow at residues 52–72 (VEEQ…HSEP) and 95–157 (KTSI…TFIS). A compositionally biased stretch (basic and acidic residues) spans 120 to 141 (RTDDTQEHFPHRVSDPSGEQKQ). Over residues 143 to 152 (LPSRRKKQQK) the composition is skewed to basic residues. A phosphoserine mark is found at Ser-172 and Ser-190. Residues 252–273 (TLSDSGSSQHLEHIPPKGSSEL) form a disordered region. The residue at position 285 (Ser-285) is a Phosphoserine. The segment at 346–365 (KEQNQTEKSLKSPSDTLDGR) is disordered. Ser-376 and Ser-387 each carry phosphoserine. The tract at residues 395–446 (SCTVPEGLLFPAEYYVRTTRSMSNCQRKVAVEAVIQSHLDVKKKGFKNKNKD) is chAM (Chromatin-association motif); required for chromatin association, mediates nucleosome association. Positions 440 to 525 (FKNKNKDASK…RKSACTPASD (86 aa)) are disordered. Ser-454 carries the post-translational modification Phosphoserine. The segment covering 467–488 (GTCTGQPSSRTSQKLLSLTKVS) has biased composition (polar residues). Residue Ser-660 is modified to Phosphoserine. 2 disordered regions span residues 679-698 (PGKS…KTGL) and 774-798 (KQFD…QGQP). Over residues 687 to 698 (PNSQSQHTKTGL) the composition is skewed to polar residues. The required for interaction with POLH and POLH DNA synthesis stimulation stretch occupies residues 775-1186 (QFDSSGSPAK…DGNIFVYHYS (412 aa)). Position 781 is a phosphoserine (Ser-781). The segment at 853–1186 (GNLQLVSELK…DGNIFVYHYS (334 aa)) is interaction with RAD51, BRCA2 and POLH. 7 WD repeats span residues 854–915 (NLQL…WHFA), 917–961 (VPVL…QVLL), 962–1009 (KSGN…LMPP), 1010–1052 (EETI…MHID), 1058–1109 (SVCH…MLYC), 1115–1153 (AGRF…LLPP), and 1155–1186 (SDQH…YHYS).

Homooligomer; dissociated upon DNA damage thus allowing association with BRCA1. Oligomerization is essential for its focal accumulation at DNA breaks. Part of a BRCA complex containing BRCA1, BRCA2 and PALB2. Interacts with BRCA1 and this interaction is essential for its function in HRR. Interacts with RAD51AP1 and MORF4L1/MRG15. Component of the homologous recombination repair (HR) complex composed of ERCC5/XPG, BRCA2, PALB2, DSS1 and RAD51. Within the complex, interacts with ERCC5/XPG and BRCA2. Interacts with BRCA2, RAD51C, RAD51 and XRCC3; the interactions are direct and it may serve as a scaffold for a HR complex containing PALB2, BRCA2, RAD51C, RAD51 and XRCC3. Interacts with POLH; the interaction is direct.

It localises to the nucleus. Its function is as follows. Plays a critical role in homologous recombination repair (HRR) through its ability to recruit BRCA2 and RAD51 to DNA breaks. Strongly stimulates the DNA strand-invasion activity of RAD51, stabilizes the nucleoprotein filament against a disruptive BRC3-BRC4 polypeptide and helps RAD51 to overcome the suppressive effect of replication protein A (RPA). Functionally cooperates with RAD51AP1 in promoting of D-loop formation by RAD51. Serves as the molecular scaffold in the formation of the BRCA1-PALB2-BRCA2 complex which is essential for homologous recombination. Via its WD repeats is proposed to scaffold a HR complex containing RAD51C and BRCA2 which is thought to play a role in HR-mediated DNA repair. Essential partner of BRCA2 that promotes the localization and stability of BRCA2. Also enables its recombinational repair and checkpoint functions of BRCA2. May act by promoting stable association of BRCA2 with nuclear structures, allowing BRCA2 to escape the effects of proteasome-mediated degradation. Binds DNA with high affinity for D loop, which comprises single-stranded, double-stranded and branched DNA structures. May play a role in the extension step after strand invasion at replication-dependent DNA double-strand breaks; together with BRCA2 is involved in both POLH localization at collapsed replication forks and DNA polymerization activity. This is Partner and localizer of BRCA2 (PALB2) from Homo sapiens (Human).